We begin with the raw amino-acid sequence, 401 residues long: Protein-glutamate methylesterase/protein-glutamine glutaminase (401 aa).

One can recognise a Response regulatory domain in the interval 16-134 (RVLVIDDSAV…LAGAEEFRRD (119 aa)). Aspartate 67 is subject to 4-aspartylphosphate. The segment at 146–208 (PIPPVPTQRD…PQGRGTPRNT (63 aa)) is disordered. Low complexity-rich tracts occupy residues 166 to 176 (AAPGAPVARSI) and 185 to 199 (SAPA…AQPP). In terms of domain architecture, CheB-type methylesterase spans 205–400 (PRNTARPEII…PGIVRRAKGG (196 aa)). Catalysis depends on residues serine 219, histidine 246, and aspartate 342.

It belongs to the CheB family. Phosphorylated by CheA. Phosphorylation of the N-terminal regulatory domain activates the methylesterase activity.

The protein localises to the cytoplasm. It catalyses the reaction [protein]-L-glutamate 5-O-methyl ester + H2O = L-glutamyl-[protein] + methanol + H(+). The catalysed reaction is L-glutaminyl-[protein] + H2O = L-glutamyl-[protein] + NH4(+). In terms of biological role, involved in chemotaxis. Part of a chemotaxis signal transduction system that modulates chemotaxis in response to various stimuli. Catalyzes the demethylation of specific methylglutamate residues introduced into the chemoreceptors (methyl-accepting chemotaxis proteins or MCP) by CheR. Also mediates the irreversible deamidation of specific glutamine residues to glutamic acid. This chain is Protein-glutamate methylesterase/protein-glutamine glutaminase, found in Maricaulis maris (strain MCS10) (Caulobacter maris).